Here is a 124-residue protein sequence, read N- to C-terminus: Trophoblast-specific protein alpha (124 aa).

Residues 1 to 18 form the signal peptide; the sequence is MTPTIFLVILCLGVASAV. Disordered stretches follow at residues 51–74 and 91–124; these read KLHSSENDQETEGSNIEMSASGQL and FEEEENKPQPVVDDPEFEDYTESGDGFFVPNQPQ. Positions 62–74 are enriched in polar residues; sequence EGSNIEMSASGQL. The span at 103 to 112 shows a compositional bias: acidic residues; the sequence is DDPEFEDYTE.

It localises to the secreted. The protein resides in the extracellular space. Its function is as follows. It may be a growth factor/hormone, perhaps involved in interaction between the maternal and fetal systems in maintenance of pregnancy. The sequence is that of Trophoblast-specific protein alpha (Tpbpa) from Mus musculus (Mouse).